Reading from the N-terminus, the 492-residue chain is Phytoene desaturase (lycopene-forming) (492 aa).

FAD is bound at residue 5 to 38; that stretch reads TVIGAGFGGLALAIRLQAAGIPVLLLEQRDKPGG.

It belongs to the carotenoid/retinoid oxidoreductase family. FAD serves as cofactor.

The protein resides in the cell membrane. It catalyses the reaction 15-cis-phytoene + 4 A = all-trans-lycopene + 4 AH2. The protein operates within carotenoid biosynthesis; lycopene biosynthesis. With respect to regulation, inhibited by NAD and NADP. Its function is as follows. Converts 15-cis-phytoene into all-trans-lycopene via the intermediary of all-trans-phytofluene, all-trans-zeta-carotene and all-trans-neurosporene, by the introduction of four double bonds. The polypeptide is Phytoene desaturase (lycopene-forming) (crtI) (Pantoea ananas (Erwinia uredovora)).